The chain runs to 283 residues: Acetylglutamate kinase (283 aa).

Residues 64–65, Arg-86, and Asn-181 contribute to the substrate site; that span reads GG.

It belongs to the acetylglutamate kinase family. ArgB subfamily.

It localises to the cytoplasm. The catalysed reaction is N-acetyl-L-glutamate + ATP = N-acetyl-L-glutamyl 5-phosphate + ADP. Its pathway is amino-acid biosynthesis; L-arginine biosynthesis; N(2)-acetyl-L-ornithine from L-glutamate: step 2/4. In terms of biological role, catalyzes the ATP-dependent phosphorylation of N-acetyl-L-glutamate. This chain is Acetylglutamate kinase, found in Sulfurovum sp. (strain NBC37-1).